A 229-amino-acid polypeptide reads, in one-letter code: Ribonuclease 3 (229 aa).

Residues 7–132 (LRAFESRIGH…VIAAVYLDAG (126 aa)) enclose the RNase III domain. Glu45 contacts Mg(2+). Residue Asp49 is part of the active site. Mg(2+) is bound by residues Asp118 and Glu121. The active site involves Glu121. In terms of domain architecture, DRBM spans 157 to 226 (DAKTALQEWA…ARALLARMEA (70 aa)).

The protein belongs to the ribonuclease III family. As to quaternary structure, homodimer. The cofactor is Mg(2+).

The protein localises to the cytoplasm. It catalyses the reaction Endonucleolytic cleavage to 5'-phosphomonoester.. Functionally, digests double-stranded RNA. Involved in the processing of primary rRNA transcript to yield the immediate precursors to the large and small rRNAs (23S and 16S). Processes some mRNAs, and tRNAs when they are encoded in the rRNA operon. Processes pre-crRNA and tracrRNA of type II CRISPR loci if present in the organism. The sequence is that of Ribonuclease 3 from Cereibacter sphaeroides (strain ATCC 17025 / ATH 2.4.3) (Rhodobacter sphaeroides).